A 414-amino-acid chain; its full sequence is 2,3-bisphosphoglycerate-independent phosphoglycerate mutase (414 aa).

Belongs to the BPG-independent phosphoglycerate mutase family. A-PGAM subfamily.

It catalyses the reaction (2R)-2-phosphoglycerate = (2R)-3-phosphoglycerate. The protein operates within carbohydrate degradation; glycolysis; pyruvate from D-glyceraldehyde 3-phosphate: step 3/5. In terms of biological role, catalyzes the interconversion of 2-phosphoglycerate and 3-phosphoglycerate. The polypeptide is 2,3-bisphosphoglycerate-independent phosphoglycerate mutase (Saccharolobus islandicus (strain L.S.2.15 / Lassen #1) (Sulfolobus islandicus)).